Consider the following 265-residue polypeptide: Thiazole synthase (265 aa).

Lysine 107 acts as the Schiff-base intermediate with DXP in catalysis. 1-deoxy-D-xylulose 5-phosphate-binding positions include glycine 168, 194–195 (AG), and 216–217 (NT).

The protein belongs to the ThiG family. Homotetramer. Forms heterodimers with either ThiH or ThiS.

It localises to the cytoplasm. The catalysed reaction is [ThiS sulfur-carrier protein]-C-terminal-Gly-aminoethanethioate + 2-iminoacetate + 1-deoxy-D-xylulose 5-phosphate = [ThiS sulfur-carrier protein]-C-terminal Gly-Gly + 2-[(2R,5Z)-2-carboxy-4-methylthiazol-5(2H)-ylidene]ethyl phosphate + 2 H2O + H(+). It functions in the pathway cofactor biosynthesis; thiamine diphosphate biosynthesis. Functionally, catalyzes the rearrangement of 1-deoxy-D-xylulose 5-phosphate (DXP) to produce the thiazole phosphate moiety of thiamine. Sulfur is provided by the thiocarboxylate moiety of the carrier protein ThiS. In vitro, sulfur can be provided by H(2)S. In Pseudomonas paraeruginosa (strain DSM 24068 / PA7) (Pseudomonas aeruginosa (strain PA7)), this protein is Thiazole synthase.